Reading from the N-terminus, the 396-residue chain is Elongation factor Tu (396 aa).

One can recognise a tr-type G domain in the interval 10 to 205; sequence KPHVNIGTIG…ACDDSIPDPE (196 aa). The segment at 19–26 is G1; sequence GHVDHGKT. 19–26 serves as a coordination point for GTP; it reads GHVDHGKT. Position 26 (threonine 26) interacts with Mg(2+). Residues 62 to 66 form a G2 region; it reads GITIN. Residues 83–86 are G3; it reads DAPG. Residues 83–87 and 138–141 each bind GTP; these read DAPGH and NKCD. The tract at residues 138–141 is G4; that stretch reads NKCD. Residues 175-177 form a G5 region; sequence SAL.

This sequence belongs to the TRAFAC class translation factor GTPase superfamily. Classic translation factor GTPase family. EF-Tu/EF-1A subfamily. As to quaternary structure, monomer.

The protein resides in the cytoplasm. It carries out the reaction GTP + H2O = GDP + phosphate + H(+). In terms of biological role, GTP hydrolase that promotes the GTP-dependent binding of aminoacyl-tRNA to the A-site of ribosomes during protein biosynthesis. The chain is Elongation factor Tu from Corynebacterium aurimucosum (strain ATCC 700975 / DSM 44827 / CIP 107346 / CN-1) (Corynebacterium nigricans).